Here is a 1588-residue protein sequence, read N- to C-terminus: Pentafunctional AROM polypeptide (1588 aa).

Residues 1–392 (MVQLAKVPIL…YGDSAQFVSD (392 aa)) are 3-dehydroquinate synthase. NAD(+) contacts are provided by residues 43-45 (DTN), 78-81 (ETSK), 109-111 (GGV), and Asp-114. A 7-phospho-2-dehydro-3-deoxy-D-arabino-heptonate-binding site is contributed by Arg-125. 134-135 (TS) serves as a coordination point for NAD(+). Asp-141 and Lys-147 together coordinate 7-phospho-2-dehydro-3-deoxy-D-arabino-heptonate. Position 156 (Lys-156) interacts with NAD(+). Asn-157 is a 7-phospho-2-dehydro-3-deoxy-D-arabino-heptonate binding site. Residues 174-177 (WLET) and Asn-185 each bind NAD(+). Zn(2+) is bound at residue Glu-189. 7-phospho-2-dehydro-3-deoxy-D-arabino-heptonate is bound by residues 189 to 192 (EVIK) and Lys-258. Glu-268 serves as the catalytic Proton acceptor; for 3-dehydroquinate synthase activity. Residues 272–276 (RNLLN) and His-279 contribute to the 7-phospho-2-dehydro-3-deoxy-D-arabino-heptonate site. Residue His-279 participates in Zn(2+) binding. The active-site Proton acceptor; for 3-dehydroquinate synthase activity is the His-283. 2 residues coordinate 7-phospho-2-dehydro-3-deoxy-D-arabino-heptonate: His-295 and Lys-364. His-295 serves as a coordination point for Zn(2+). The EPSP synthase stretch occupies residues 405-871 (VYPFKDIPAD…WDVLHSELGA (467 aa)). Cys-853 functions as the For EPSP synthase activity in the catalytic mechanism. Residues 890 to 1080 (SVVIIGMRAA…IPSGRSAFVC (191 aa)) form a shikimate kinase region. 895–902 (GMRAAGKT) serves as a coordination point for ATP. The interval 1081–1293 (LTFDDLTEQT…AAPGQLTVAQ (213 aa)) is 3-dehydroquinase. The active-site Proton acceptor; for 3-dehydroquinate dehydratase activity is the His-1198. Lys-1227 (schiff-base intermediate with substrate; for 3-dehydroquinate dehydratase activity) is an active-site residue. Residues 1306–1588 (PKELFVVGKP…KAIFDAVTKE (283 aa)) are shikimate dehydrogenase.

This sequence in the N-terminal section; belongs to the sugar phosphate cyclases superfamily. Dehydroquinate synthase family. In the 2nd section; belongs to the EPSP synthase family. It in the 3rd section; belongs to the shikimate kinase family. The protein in the 4th section; belongs to the type-I 3-dehydroquinase family. This sequence in the C-terminal section; belongs to the shikimate dehydrogenase family. As to quaternary structure, homodimer. It depends on Zn(2+) as a cofactor.

Its subcellular location is the cytoplasm. It carries out the reaction 7-phospho-2-dehydro-3-deoxy-D-arabino-heptonate = 3-dehydroquinate + phosphate. The enzyme catalyses 3-dehydroquinate = 3-dehydroshikimate + H2O. The catalysed reaction is shikimate + NADP(+) = 3-dehydroshikimate + NADPH + H(+). It catalyses the reaction shikimate + ATP = 3-phosphoshikimate + ADP + H(+). It carries out the reaction 3-phosphoshikimate + phosphoenolpyruvate = 5-O-(1-carboxyvinyl)-3-phosphoshikimate + phosphate. The protein operates within metabolic intermediate biosynthesis; chorismate biosynthesis; chorismate from D-erythrose 4-phosphate and phosphoenolpyruvate: step 2/7. It participates in metabolic intermediate biosynthesis; chorismate biosynthesis; chorismate from D-erythrose 4-phosphate and phosphoenolpyruvate: step 3/7. It functions in the pathway metabolic intermediate biosynthesis; chorismate biosynthesis; chorismate from D-erythrose 4-phosphate and phosphoenolpyruvate: step 4/7. Its pathway is metabolic intermediate biosynthesis; chorismate biosynthesis; chorismate from D-erythrose 4-phosphate and phosphoenolpyruvate: step 5/7. The protein operates within metabolic intermediate biosynthesis; chorismate biosynthesis; chorismate from D-erythrose 4-phosphate and phosphoenolpyruvate: step 6/7. The AROM polypeptide catalyzes 5 consecutive enzymatic reactions in prechorismate polyaromatic amino acid biosynthesis. The chain is Pentafunctional AROM polypeptide from Saccharomyces cerevisiae (strain RM11-1a) (Baker's yeast).